The sequence spans 330 residues: Alpha/beta hydrolase domain-containing protein VTE7 (330 aa).

One can recognise an AB hydrolase-1 domain in the interval 84-315; sequence VVLLHCFDSS…GHLPHVENPK (232 aa). The Nucleophile role is filled by S157. Active-site charge relay system residues include D279 and H307.

This sequence belongs to the AB hydrolase superfamily.

It is found in the plastid. It localises to the chloroplast envelope. Hydrolase involved in tocopherol (vitamin E) biosynthesis. Releases prenyl alcohols from chlorophyll biosynthetic intermediates, which are then converted to the corresponding diphosphates for tocopherol biosynthesis. Provides most of the phytol from chlorophyll for tocopherol biosynthesis in seeds. The sequence is that of Alpha/beta hydrolase domain-containing protein VTE7 from Arabidopsis thaliana (Mouse-ear cress).